Here is a 172-residue protein sequence, read N- to C-terminus: Adenine phosphoribosyltransferase (172 aa).

Belongs to the purine/pyrimidine phosphoribosyltransferase family. As to quaternary structure, homodimer.

The protein resides in the cytoplasm. The catalysed reaction is AMP + diphosphate = 5-phospho-alpha-D-ribose 1-diphosphate + adenine. It functions in the pathway purine metabolism; AMP biosynthesis via salvage pathway; AMP from adenine: step 1/1. Catalyzes a salvage reaction resulting in the formation of AMP, that is energically less costly than de novo synthesis. This is Adenine phosphoribosyltransferase from Streptococcus agalactiae serotype Ia (strain ATCC 27591 / A909 / CDC SS700).